A 452-amino-acid polypeptide reads, in one-letter code: Bifunctional protein GlmU (452 aa).

The pyrophosphorylase stretch occupies residues 1–226 (MSLTTVILAA…PMEVEGANNR (226 aa)). UDP-N-acetyl-alpha-D-glucosamine is bound by residues 8–11 (LAAG), lysine 22, glutamine 73, 78–79 (GT), 100–102 (YGD), glycine 137, glutamate 151, asparagine 166, and asparagine 224. Aspartate 102 lines the Mg(2+) pocket. Residue asparagine 224 participates in Mg(2+) binding. Positions 227–247 (IQLAGLERAYQAWQAQELMLN) are linker. Residues 248-452 (GATLADPARI…LDGWKRPVKK (205 aa)) are N-acetyltransferase. Arginine 330 and lysine 348 together coordinate UDP-N-acetyl-alpha-D-glucosamine. Histidine 360 functions as the Proton acceptor in the catalytic mechanism. 2 residues coordinate UDP-N-acetyl-alpha-D-glucosamine: tyrosine 363 and asparagine 374. Acetyl-CoA contacts are provided by residues alanine 377, 383–384 (NY), serine 402, alanine 420, and arginine 437.

It in the N-terminal section; belongs to the N-acetylglucosamine-1-phosphate uridyltransferase family. The protein in the C-terminal section; belongs to the transferase hexapeptide repeat family. In terms of assembly, homotrimer. It depends on Mg(2+) as a cofactor.

The protein resides in the cytoplasm. It catalyses the reaction alpha-D-glucosamine 1-phosphate + acetyl-CoA = N-acetyl-alpha-D-glucosamine 1-phosphate + CoA + H(+). The enzyme catalyses N-acetyl-alpha-D-glucosamine 1-phosphate + UTP + H(+) = UDP-N-acetyl-alpha-D-glucosamine + diphosphate. It functions in the pathway nucleotide-sugar biosynthesis; UDP-N-acetyl-alpha-D-glucosamine biosynthesis; N-acetyl-alpha-D-glucosamine 1-phosphate from alpha-D-glucosamine 6-phosphate (route II): step 2/2. Its pathway is nucleotide-sugar biosynthesis; UDP-N-acetyl-alpha-D-glucosamine biosynthesis; UDP-N-acetyl-alpha-D-glucosamine from N-acetyl-alpha-D-glucosamine 1-phosphate: step 1/1. It participates in bacterial outer membrane biogenesis; LPS lipid A biosynthesis. Its function is as follows. Catalyzes the last two sequential reactions in the de novo biosynthetic pathway for UDP-N-acetylglucosamine (UDP-GlcNAc). The C-terminal domain catalyzes the transfer of acetyl group from acetyl coenzyme A to glucosamine-1-phosphate (GlcN-1-P) to produce N-acetylglucosamine-1-phosphate (GlcNAc-1-P), which is converted into UDP-GlcNAc by the transfer of uridine 5-monophosphate (from uridine 5-triphosphate), a reaction catalyzed by the N-terminal domain. The sequence is that of Bifunctional protein GlmU from Pseudoalteromonas translucida (strain TAC 125).